The primary structure comprises 426 residues: AP-1 complex subunit mu-1 (426 aa).

Positions 167 to 425 constitute an MHD domain; it reads KNEVFLDVIE…TQNGTEYSIR (259 aa).

The protein belongs to the adaptor complexes medium subunit family. Adaptor protein complex 1 (AP-1) is a heterotetramer composed of two large adaptins (gamma-type subunit apl4 and beta-type subunit apl2), a medium adaptin (mu-type subunit apm1) and a small adaptin (sigma-type subunit aps1). AP-1 interacts with clathrin. Interacts with sad1.

It localises to the cytoplasmic vesicle. The protein localises to the clathrin-coated vesicle membrane. The protein resides in the membrane. Its subcellular location is the clathrin-coated pit. Its function is as follows. Component of the adaptor complexes which link clathrin to receptors in coated vesicles. Clathrin-associated protein complexes are believed to interact with the cytoplasmic tails of membrane proteins, leading to their selection and concentration. This chain is AP-1 complex subunit mu-1 (apm1), found in Schizosaccharomyces pombe (strain 972 / ATCC 24843) (Fission yeast).